We begin with the raw amino-acid sequence, 372 residues long: Anhydro-N-acetylmuramic acid kinase (372 aa).

21–28 (GTSMDGVD) contacts ATP.

The protein belongs to the anhydro-N-acetylmuramic acid kinase family.

It catalyses the reaction 1,6-anhydro-N-acetyl-beta-muramate + ATP + H2O = N-acetyl-D-muramate 6-phosphate + ADP + H(+). The protein operates within amino-sugar metabolism; 1,6-anhydro-N-acetylmuramate degradation. Its pathway is cell wall biogenesis; peptidoglycan recycling. Its function is as follows. Catalyzes the specific phosphorylation of 1,6-anhydro-N-acetylmuramic acid (anhMurNAc) with the simultaneous cleavage of the 1,6-anhydro ring, generating MurNAc-6-P. Is required for the utilization of anhMurNAc either imported from the medium or derived from its own cell wall murein, and thus plays a role in cell wall recycling. The polypeptide is Anhydro-N-acetylmuramic acid kinase (Bordetella avium (strain 197N)).